Consider the following 689-residue polypeptide: DNA ligase (689 aa).

Residues 40 to 44, 89 to 90, and glutamate 121 each bind NAD(+); these read DAEYD and SL. Lysine 123 acts as the N6-AMP-lysine intermediate in catalysis. NAD(+) is bound by residues arginine 144, glutamate 179, lysine 295, and lysine 319. The Zn(2+) site is built by cysteine 413, cysteine 416, cysteine 431, and cysteine 437. The region spanning 610–689 is the BRCT domain; that stretch reads REQSSLTGKI…AEWLTLVRDI (80 aa).

It belongs to the NAD-dependent DNA ligase family. LigA subfamily. The cofactor is Mg(2+). It depends on Mn(2+) as a cofactor.

The catalysed reaction is NAD(+) + (deoxyribonucleotide)n-3'-hydroxyl + 5'-phospho-(deoxyribonucleotide)m = (deoxyribonucleotide)n+m + AMP + beta-nicotinamide D-nucleotide.. Functionally, DNA ligase that catalyzes the formation of phosphodiester linkages between 5'-phosphoryl and 3'-hydroxyl groups in double-stranded DNA using NAD as a coenzyme and as the energy source for the reaction. It is essential for DNA replication and repair of damaged DNA. The protein is DNA ligase of Rickettsia bellii (strain RML369-C).